Consider the following 309-residue polypeptide: ESX-3 secretion system protein EccE3 (309 aa).

Transmembrane regions (helical) follow at residues 5–25 and 29–49; these read IALASLFVVAAVLAQPWQTTT and VLGVSIAAVIVLLAWWKGMFL.

The protein belongs to the EccE family. As to quaternary structure, part of the ESX-3 / type VII secretion system (T7SS), which is composed of cytosolic and membrane components. The ESX-3 membrane complex is composed of EccB3, EccC3, EccD3 and EccE3.

The protein resides in the cell inner membrane. Part of the ESX-3 specialized secretion system, which is required for siderophore-mediated iron acquisition and for the secretion of EsxH and EsxG. The chain is ESX-3 secretion system protein EccE3 from Mycolicibacterium smegmatis (strain ATCC 700084 / mc(2)155) (Mycobacterium smegmatis).